Reading from the N-terminus, the 32-residue chain is Photosystem II reaction center protein T (32 aa).

The helical transmembrane segment at 3 to 23 threads the bilayer; the sequence is ALVYTFLLIGTLMVIFFAVFF.

It belongs to the PsbT family. As to quaternary structure, PSII is composed of 1 copy each of membrane proteins PsbA, PsbB, PsbC, PsbD, PsbE, PsbF, PsbH, PsbI, PsbJ, PsbK, PsbL, PsbM, PsbT, PsbX, PsbY, PsbZ, Psb30/Ycf12, at least 3 peripheral proteins of the oxygen-evolving complex and a large number of cofactors. It forms dimeric complexes.

Its subcellular location is the plastid. The protein localises to the chloroplast thylakoid membrane. Its function is as follows. Found at the monomer-monomer interface of the photosystem II (PS II) dimer, plays a role in assembly and dimerization of PSII. PSII is a light-driven water plastoquinone oxidoreductase, using light energy to abstract electrons from H(2)O, generating a proton gradient subsequently used for ATP formation. In Thalassiosira pseudonana (Marine diatom), this protein is Photosystem II reaction center protein T.